Consider the following 227-residue polypeptide: Urease accessory protein UreG (227 aa).

Residues 1–10 (MHLDHAHTHD) show a composition bias toward basic and acidic residues. A disordered region spans residues 1–22 (MHLDHAHTHDGPSAVSADAHRP). 35–42 (GPVGSGKT) serves as a coordination point for GTP.

This sequence belongs to the SIMIBI class G3E GTPase family. UreG subfamily. Homodimer. UreD, UreF and UreG form a complex that acts as a GTP-hydrolysis-dependent molecular chaperone, activating the urease apoprotein by helping to assemble the nickel containing metallocenter of UreC. The UreE protein probably delivers the nickel.

It is found in the cytoplasm. Its function is as follows. Facilitates the functional incorporation of the urease nickel metallocenter. This process requires GTP hydrolysis, probably effectuated by UreG. This is Urease accessory protein UreG from Streptomyces avermitilis (strain ATCC 31267 / DSM 46492 / JCM 5070 / NBRC 14893 / NCIMB 12804 / NRRL 8165 / MA-4680).